The sequence spans 264 residues: MDNRPIGFLDSGVGGLTVVRELMRQLPHEEIVYIGDSARAPYGPRPAEQIREYTWQLVNFLLTKDVKMIVIACNTATAVVWEEIKAQLDIPVLGVILPGASAAIKSSQGGKIGVIGTPMTVQSDIYRQKIHDLDPDLQVESLACPKFAPLVESGALSTSVTKKVVYETLRPLVGKVDSLILGCTHYPLLRPIIQNVMGPKVQLIDSGAECVRDISVLLNYFEINRGRDAGPLHHRFYTTASSQSFAQIGEEWLEKEIHVEHVEL.

Substrate-binding positions include 10 to 11 and 42 to 43; these read DS and YG. Cys73 acts as the Proton donor/acceptor in catalysis. Substrate is bound at residue 74-75; it reads NT. Cys183 (proton donor/acceptor) is an active-site residue. 184 to 185 is a binding site for substrate; that stretch reads TH.

Belongs to the aspartate/glutamate racemases family.

The enzyme catalyses L-glutamate = D-glutamate. The protein operates within cell wall biogenesis; peptidoglycan biosynthesis. Functionally, provides the (R)-glutamate required for cell wall biosynthesis. In Streptococcus pneumoniae (strain ATCC BAA-255 / R6), this protein is Glutamate racemase.